Reading from the N-terminus, the 352-residue chain is N-acetyl-gamma-glutamyl-phosphate reductase 1 (352 aa).

The protein belongs to the NAGSA dehydrogenase family. Type 1 subfamily.

The protein resides in the cytoplasm. The catalysed reaction is N-acetyl-L-glutamate 5-semialdehyde + phosphate + NADP(+) = N-acetyl-L-glutamyl 5-phosphate + NADPH + H(+). The protein operates within amino-acid biosynthesis; L-arginine biosynthesis; N(2)-acetyl-L-ornithine from L-glutamate: step 3/4. Its function is as follows. Catalyzes the NADPH-dependent reduction of N-acetyl-5-glutamyl phosphate to yield N-acetyl-L-glutamate 5-semialdehyde. The protein is N-acetyl-gamma-glutamyl-phosphate reductase 1 of Nostoc sp. (strain PCC 7120 / SAG 25.82 / UTEX 2576).